Consider the following 579-residue polypeptide: 3-hydroxy-3-methylglutaryl-coenzyme A reductase (579 aa).

Positions 1-22 (MEVRGGVGQGSAARHPPAPEPS) are disordered. A run of 2 helical transmembrane segments spans residues 36–56 (LPIR…LAYL) and 80–100 (AIFG…IAFV). The interval 101-153 (QSIVSSGDDDEDFLVGSGSSGSAAAPSRQHAQAPAPCELLGSPAAAPEKMPED) is linker. Positions 154–579 (DEEIVASVVA…EKTRQREVDV (426 aa)) are catalytic. Residue glutamate 247 is the Charge relay system of the active site. N-linked (GlcNAc...) asparagine glycosylation occurs at asparagine 311. Active-site charge relay system residues include lysine 379 and aspartate 455. The chain crosses the membrane as a helical span at residues 524 to 544 (LLATVVAGGVLAGELSLLSAL). Histidine 553 (proton donor) is an active-site residue. The interval 555 to 579 (KYNRSSKDVSSTTATEKTRQREVDV) is disordered. N-linked (GlcNAc...) asparagine glycosylation occurs at asparagine 557. The span at 570–579 (EKTRQREVDV) shows a compositional bias: basic and acidic residues.

It belongs to the HMG-CoA reductase family.

It is found in the endoplasmic reticulum membrane. It carries out the reaction (R)-mevalonate + 2 NADP(+) + CoA = (3S)-3-hydroxy-3-methylglutaryl-CoA + 2 NADPH + 2 H(+). The protein operates within metabolic intermediate biosynthesis; (R)-mevalonate biosynthesis; (R)-mevalonate from acetyl-CoA: step 3/3. Its function is as follows. Catalyzes the synthesis of mevalonate. The specific precursor of all isoprenoid compounds present in plants. This Zea mays (Maize) protein is 3-hydroxy-3-methylglutaryl-coenzyme A reductase (HMGR).